Here is a 244-residue protein sequence, read N- to C-terminus: Orotidine 5'-phosphate decarboxylase (244 aa).

Substrate contacts are provided by residues Asp-10, Lys-32, 59 to 68 (DLKLHDIPNT), Thr-122, Arg-184, Gln-193, Gly-213, and Arg-214. The active-site Proton donor is the Lys-61.

It belongs to the OMP decarboxylase family. Type 1 subfamily. Homodimer.

It catalyses the reaction orotidine 5'-phosphate + H(+) = UMP + CO2. Its pathway is pyrimidine metabolism; UMP biosynthesis via de novo pathway; UMP from orotate: step 2/2. Catalyzes the decarboxylation of orotidine 5'-monophosphate (OMP) to uridine 5'-monophosphate (UMP). The sequence is that of Orotidine 5'-phosphate decarboxylase from Geobacillus kaustophilus (strain HTA426).